The primary structure comprises 165 residues: HTH-type transcriptional regulator IscR (165 aa).

The 130-residue stretch at 2-131 folds into the HTH rrf2-type domain; it reads RLTSKGRYAV…NNITLAELVS (130 aa). A DNA-binding region (H-T-H motif) is located at residues 28–51; the sequence is LAEISERQGISLSYLEQLFSRLRK. Residues Cys-92, Cys-98, and Cys-104 each contribute to the [2Fe-2S] cluster site. The interval 144-165 is disordered; sequence NDTRRPLTNGRPQETINVNLHA. A compositionally biased stretch (polar residues) spans 153 to 165; that stretch reads GRPQETINVNLHA.

Requires [2Fe-2S] cluster as cofactor.

Its function is as follows. Regulates the transcription of several operons and genes involved in the biogenesis of Fe-S clusters and Fe-S-containing proteins. The chain is HTH-type transcriptional regulator IscR from Sodalis glossinidius (strain morsitans).